We begin with the raw amino-acid sequence, 504 residues long: Glutamate--tRNA ligase (504 aa).

Positions 25 to 35 (PSPTGNPHVGL) match the 'HIGH' region motif. Positions 122, 124, 149, and 151 each coordinate Zn(2+). The 'KMSKS' region signature appears at 270–274 (KLSKR). Lys-273 contributes to the ATP binding site.

This sequence belongs to the class-I aminoacyl-tRNA synthetase family. Glutamate--tRNA ligase type 1 subfamily. Monomer. Requires Zn(2+) as cofactor.

Its subcellular location is the cytoplasm. The enzyme catalyses tRNA(Glu) + L-glutamate + ATP = L-glutamyl-tRNA(Glu) + AMP + diphosphate. In terms of biological role, catalyzes the attachment of glutamate to tRNA(Glu) in a two-step reaction: glutamate is first activated by ATP to form Glu-AMP and then transferred to the acceptor end of tRNA(Glu). The protein is Glutamate--tRNA ligase of Streptomyces griseus subsp. griseus (strain JCM 4626 / CBS 651.72 / NBRC 13350 / KCC S-0626 / ISP 5235).